The primary structure comprises 162 residues: Protein hcp1 (162 aa).

The protein belongs to the hcp1 family. In terms of assembly, hexamer. Three hcp1 monomers form two closely related hexameric rings with a 40 Angstrom internal diameter.

Its subcellular location is the secreted. In terms of biological role, required for assembly of the protein secretion apparatus HSI-I. Actively secreted during chronic infection of cystic fibrosis patients. The chain is Protein hcp1 (hcp1) from Pseudomonas aeruginosa (strain ATCC 15692 / DSM 22644 / CIP 104116 / JCM 14847 / LMG 12228 / 1C / PRS 101 / PAO1).